We begin with the raw amino-acid sequence, 249 residues long: Ribonuclease PH (249 aa).

Residues Arg86 and 124 to 126 (GTR) each bind phosphate.

This sequence belongs to the RNase PH family. Homohexameric ring arranged as a trimer of dimers.

The catalysed reaction is tRNA(n+1) + phosphate = tRNA(n) + a ribonucleoside 5'-diphosphate. Functionally, phosphorolytic 3'-5' exoribonuclease that plays an important role in tRNA 3'-end maturation. Removes nucleotide residues following the 3'-CCA terminus of tRNAs; can also add nucleotides to the ends of RNA molecules by using nucleoside diphosphates as substrates, but this may not be physiologically important. Probably plays a role in initiation of 16S rRNA degradation (leading to ribosome degradation) during starvation. The polypeptide is Ribonuclease PH (Clostridium botulinum (strain Eklund 17B / Type B)).